The following is a 151-amino-acid chain: UPF0178 protein YaiI (151 aa).

It belongs to the UPF0178 family.

The protein is UPF0178 protein YaiI of Salmonella arizonae (strain ATCC BAA-731 / CDC346-86 / RSK2980).